A 360-amino-acid chain; its full sequence is MSQKNPEYAADHDHTREEMQNLQVAPASSDVEEPCSSSHLMASSLKGHTSEETQVPEDMEEPCSSSQLLTASNQEDPAYETPSTSRGLQHPYVSSSESAKGLGNKEMQGNSVIPPDQPDLPVMTIDGKVNFLVNYMLYKYQVKEMMSMNDIMTLIVREDEHHFHEILMRASERMEMVFGLEVREVDPVNHFYALFIKLGLTYDGMRADEYSFPKTGLLILILGVVFMKGNRATEEEIWEVLNPMGIYAGMNHFIFGDPRELLTDDFVREQYLAYQPIANSDPIQYEYVWGPRAKAETSKMKVLEFVAKVHGSDPTVFPSQYEEALIEEEERTLAMILEQAGPSSASGESSSDMGSNVPHI.

Residues 1–118 (MSQKNPEYAA…GNSVIPPDQP (118 aa)) form a disordered region. A compositionally biased stretch (basic and acidic residues) spans 9 to 19 (AADHDHTREEM). A compositionally biased stretch (polar residues) spans 63–98 (CSSSQLLTASNQEDPAYETPSTSRGLQHPYVSSSES). Residues 125–324 (IDGKVNFLVN…TVFPSQYEEA (200 aa)) form the MAGE domain. The interval 340 to 360 (AGPSSASGESSSDMGSNVPHI) is disordered. Over residues 341-360 (GPSSASGESSSDMGSNVPHI) the composition is skewed to low complexity.

In Rattus norvegicus (Rat), this protein is Melanoma-associated antigen B16 (Mageb16).